Consider the following 501-residue polypeptide: L-arabinose isomerase (501 aa).

Mn(2+)-binding residues include E306, E333, H350, and H450.

This sequence belongs to the arabinose isomerase family. As to quaternary structure, homohexamer. It depends on Mn(2+) as a cofactor.

It catalyses the reaction beta-L-arabinopyranose = L-ribulose. It functions in the pathway carbohydrate degradation; L-arabinose degradation via L-ribulose; D-xylulose 5-phosphate from L-arabinose (bacterial route): step 1/3. Functionally, catalyzes the conversion of L-arabinose to L-ribulose. This Pectobacterium atrosepticum (strain SCRI 1043 / ATCC BAA-672) (Erwinia carotovora subsp. atroseptica) protein is L-arabinose isomerase.